The chain runs to 657 residues: MTQLAIGKPTPLGAHYDGQGVNFTLFSAHAERVELCVFDANGQEHRYDLPGHSGDIWHGYLPDARPGLRYGYRVHGPWQPAEGHRFNPAKLLIDPCARQIDGEFKDNPLLHAGHNEPDYRDNASIAPKCVVVVDHYDWEDDAPPRMPWGCTIIYEAHVKGLTYLHPEIPVEIRGTYKALGHPVMINYLKQLGITALELLPVAQFASEPRLQRMGLSNYWGYNPVAMFALHPAYACSPETALDEFRDAIKALHKAGIEVILDIVLNHSAELDLDGPLFSLRGIDNRSYYWIREDGDYHNWTGCGNTLNLSHPAVVDYASACLRYWVETCHVDGFRFDLAAVMGRTPEFRQDAPLFTAIQNCPVLSQVKLIAEPWDIAPGGYQVGNFPPLFAEWNDHFRDAARRFWLHYDLPLGAFAGRFAASSDVFKRNGRLPSAAINLVTAHDGFTLRDCVCFNHKHNEANGEENRDGTNNNYSNNHGKEGLGGTLDLVERRRDSIHALLTTLLLSQGTPMLLAGDEHGHSQRGNNNAYCQDNQLTWLDWSQASSGLTAFTAALIHLRKRIPALMENRWWEEGDGNVRWLNRYAQPLSTDEWQNGPKQLQILLSDRFLIAINATLEVTEIVLPAGEWHAIPPFAGEDNPVITAVWQGPAHGLCVFQR.

Aspartate 336 (nucleophile) is an active-site residue. Catalysis depends on glutamate 371, which acts as the Proton donor. The interval 460–479 is disordered; it reads ANGEENRDGTNNNYSNNHGK.

The protein belongs to the glycosyl hydrolase 13 family.

The enzyme catalyses Hydrolysis of (1-&gt;6)-alpha-D-glucosidic linkages to branches with degrees of polymerization of three or four glucose residues in limit dextrin.. It functions in the pathway glycan degradation; glycogen degradation. Its function is as follows. Removes maltotriose and maltotetraose chains that are attached by 1,6-alpha-linkage to the limit dextrin main chain, generating a debranched limit dextrin. In Escherichia coli O1:K1 / APEC, this protein is Glycogen debranching enzyme.